Consider the following 394-residue polypeptide: Elongation factor Tu (394 aa).

The region spanning 10 to 204 is the tr-type G domain; sequence KPHVNVGTIG…HLDNYIPEPE (195 aa). The G1 stretch occupies residues 19-26; the sequence is GHVDHGKT. 19-26 is a GTP binding site; sequence GHVDHGKT. Thr26 contacts Mg(2+). The interval 60–64 is G2; that stretch reads GITIN. Residues 81 to 84 form a G3 region; it reads DCPG. Residues 81-85 and 136-139 contribute to the GTP site; these read DCPGH and NKCD. The segment at 136–139 is G4; that stretch reads NKCD. Positions 174 to 176 are G5; sequence SAL.

It belongs to the TRAFAC class translation factor GTPase superfamily. Classic translation factor GTPase family. EF-Tu/EF-1A subfamily. As to quaternary structure, monomer.

Its subcellular location is the cytoplasm. The enzyme catalyses GTP + H2O = GDP + phosphate + H(+). In terms of biological role, GTP hydrolase that promotes the GTP-dependent binding of aminoacyl-tRNA to the A-site of ribosomes during protein biosynthesis. The protein is Elongation factor Tu of Histophilus somni (strain 129Pt) (Haemophilus somnus).